The chain runs to 207 residues: Glycerol-3-phosphate acyltransferase (207 aa).

A run of 5 helical transmembrane segments spans residues 2–22, 47–67, 72–92, 121–141, and 155–175; these read ILVLCFILAYFIGAIPFGVVI, MLGPVGGSIVLVLDILKGTLA, ILFGIEHHWLVLIVGLAAVFG, FFVIAFAIWFSLILLTSMVSV, and LVYHDWLLTTVACGLLVVFLI.

This sequence belongs to the PlsY family. In terms of assembly, probably interacts with PlsX.

It localises to the cell membrane. It carries out the reaction an acyl phosphate + sn-glycerol 3-phosphate = a 1-acyl-sn-glycero-3-phosphate + phosphate. The protein operates within lipid metabolism; phospholipid metabolism. In terms of biological role, catalyzes the transfer of an acyl group from acyl-phosphate (acyl-PO(4)) to glycerol-3-phosphate (G3P) to form lysophosphatidic acid (LPA). This enzyme utilizes acyl-phosphate as fatty acyl donor, but not acyl-CoA or acyl-ACP. The chain is Glycerol-3-phosphate acyltransferase from Lacticaseibacillus casei (strain BL23) (Lactobacillus casei).